A 331-amino-acid polypeptide reads, in one-letter code: Syntaxin-43 (331 aa).

At 1–305 the chain is on the cytoplasmic side; sequence MATRNRTLLF…KAERTQRQGG (305 aa). Disordered stretches follow at residues 20–45 and 59–80; these read VRAP…KSGL and PNRS…GTIT. Residues 31–40 are compositionally biased toward polar residues; sequence TLTEHNSLTG. The stretch at 124–154 forms a coiled coil; it reads KEDQHQIETLTQEVTFLLKKSEKQLQRLSAA. Residues 235–297 enclose the t-SNARE coiled-coil homology domain; it reads EEISIEREKE…DDGLKQLQKA (63 aa). The helical; Anchor for type IV membrane protein transmembrane segment at 306–326 threads the bilayer; sequence MVMCASVLVILCFIMLVLLIL. Over 327-331 the chain is Vesicular; the sequence is KEILL.

This sequence belongs to the syntaxin family. Part of the t-SNARE complex. Expressed at low levels in roots, stems, flowers and leaves.

It is found in the golgi apparatus. Its subcellular location is the trans-Golgi network membrane. In terms of biological role, contributes to the regulation of secretory and vacuolar transport pathways in the post-Golgi network, and to the maintenance of the Golgi apparatus and trans-Golgi network (TGN) morphologies. Vesicle trafficking protein that functions in the secretory pathway and mediates liposome fusion. Required for extracellular resistance responses to a fungal pathogen. Also involved in the protection of chloroplasts from salicylic acid-dependent biotic stress. The protein is Syntaxin-43 of Arabidopsis thaliana (Mouse-ear cress).